The primary structure comprises 304 residues: Probable aspartoacylase (304 aa).

Positions 13 and 16 each coordinate Zn(2+). Substrate is bound by residues arginine 55 and asparagine 62 to arginine 63. Histidine 105 is a Zn(2+) binding site. Residues glutamate 163 and tyrosine 273 each coordinate substrate.

The protein belongs to the AspA/AstE family. Aspartoacylase subfamily. The cofactor is Zn(2+).

It carries out the reaction an N-acyl-L-aspartate + H2O = a carboxylate + L-aspartate. The sequence is that of Probable aspartoacylase from Prochlorococcus marinus (strain MIT 9313).